Reading from the N-terminus, the 545-residue chain is Chaperonin GroEL (545 aa).

Residues 30–33, Lys51, 87–91, Gly415, and Asp496 contribute to the ATP site; these read TLGP and DGTTT.

The protein belongs to the chaperonin (HSP60) family. As to quaternary structure, forms a cylinder of 14 subunits composed of two heptameric rings stacked back-to-back. Interacts with the co-chaperonin GroES.

The protein resides in the cytoplasm. The catalysed reaction is ATP + H2O + a folded polypeptide = ADP + phosphate + an unfolded polypeptide.. Functionally, together with its co-chaperonin GroES, plays an essential role in assisting protein folding. The GroEL-GroES system forms a nano-cage that allows encapsulation of the non-native substrate proteins and provides a physical environment optimized to promote and accelerate protein folding. The sequence is that of Chaperonin GroEL from Chlorobaculum tepidum (strain ATCC 49652 / DSM 12025 / NBRC 103806 / TLS) (Chlorobium tepidum).